Consider the following 271-residue polypeptide: Putative carboxymethylenebutenolidase (271 aa).

Residues cysteine 147, aspartate 204, and histidine 236 contribute to the active site.

This sequence belongs to the dienelactone hydrolase family.

It catalyses the reaction 2-(5-oxo-2,5-dihydrofuran-2-ylidene)acetate + H2O = 4-oxohex-2-enedioate + H(+). This is Putative carboxymethylenebutenolidase (ysgA) from Escherichia coli O157:H7.